We begin with the raw amino-acid sequence, 34 residues long: PRRRRRSSRPVRRRRRYRRSTVARRRRRVVRRRR.

Positions 1-34 (PRRRRRSSRPVRRRRRYRRSTVARRRRRVVRRRR) are disordered.

In terms of tissue distribution, testis.

It is found in the nucleus. Its subcellular location is the chromosome. In terms of biological role, protamines substitute for histones in the chromatin of sperm during the haploid phase of spermatogenesis. They compact sperm DNA into a highly condensed, stable and inactive complex. The protein is Protamine-Z1/Z2 of Thunnus thynnus (Atlantic bluefin tuna).